We begin with the raw amino-acid sequence, 137 residues long: NADH-ubiquinone oxidoreductase chain 3 (137 aa).

3 consecutive transmembrane segments (helical) span residues 6–26, 57–77, and 86–106; these read LFIL…LIFA, FFIF…TFPF, and IYGL…FVYE.

It belongs to the complex I subunit 3 family.

It is found in the mitochondrion membrane. The enzyme catalyses a ubiquinone + NADH + 5 H(+)(in) = a ubiquinol + NAD(+) + 4 H(+)(out). Core subunit of the mitochondrial membrane respiratory chain NADH dehydrogenase (Complex I) that is believed to belong to the minimal assembly required for catalysis. Complex I functions in the transfer of electrons from NADH to the respiratory chain. The immediate electron acceptor for the enzyme is believed to be ubiquinone. The chain is NADH-ubiquinone oxidoreductase chain 3 (ND3) from Podospora anserina (strain S / ATCC MYA-4624 / DSM 980 / FGSC 10383) (Pleurage anserina).